A 229-amino-acid chain; its full sequence is Glutathione S-transferase 1 (229 aa).

Residues 2–86 (AQFTLWSHAH…YLADKYDTER (85 aa)) form the GST N-terminal domain. A GST C-terminal domain is found at 93-229 (DHPEYYKVIQ…FEERSKALDN (137 aa)).

It belongs to the GST superfamily.

It carries out the reaction RX + glutathione = an S-substituted glutathione + a halide anion + H(+). Involved in the oxidative stress response and detoxification. The protein is Glutathione S-transferase 1 (gst1) of Schizosaccharomyces pombe (strain 972 / ATCC 24843) (Fission yeast).